The sequence spans 148 residues: Sporulation inhibitor of replication protein SirA (148 aa).

This sequence belongs to the SirA family. Interacts with DnaA. Forms a 1:1 complex with domain I of DnaA.

Its subcellular location is the cytoplasm. Its function is as follows. Inhibits DNA replication initiation during sporulation, preventing overinitiation and thus enforcing diploidy; probably the main regulator of sporulation replication initiation under Spo0A control. During sporulation SirA prevents DnaA association with the replication origin to prevent excessive chromosome replication. Alternatively SirA binds to domain I of DnaA and prevent its interaction with DnaD, preventing DNA replication initiation. Upon ectopic expression during vegetative growth reduces chromosome copy number, leading to elongated cells with that can have a single nucleoid or be anucleate. Ectopic expression during vegetative growth blocks DnaA at oriC while blocking recruitment of DnaD to oriC. Plays a significant role during the onset of sporulation. This chain is Sporulation inhibitor of replication protein SirA, found in Bacillus subtilis (strain 168).